A 444-amino-acid polypeptide reads, in one-letter code: Spermatogenesis-associated protein 1 (444 aa).

A coiled-coil region spans residues 268–403 (SLLKIEREKI…RKLDTDKMKL (136 aa)).

Interacts with IFT20. As to expression, highly abundant in the testis, and is also expressed in the heart and kidney (at protein level).

The protein localises to the cytoplasmic vesicle. Its subcellular location is the secretory vesicle. It is found in the acrosome. The protein is Spermatogenesis-associated protein 1 (Spata1) of Mus musculus (Mouse).